The chain runs to 189 residues: Ribosome maturation factor RimM (189 aa).

Over residues 1-16 (MAPSCPTRSRVWSSRT) the composition is skewed to polar residues. The disordered stretch occupies residues 1 to 21 (MAPSCPTRSRVWSSRTSPPPD). Residues 118-189 (ENEFYWSDLI…TVEVDWGEDY (72 aa)) form the PRC barrel domain.

The protein belongs to the RimM family. As to quaternary structure, binds ribosomal protein uS19.

The protein localises to the cytoplasm. Functionally, an accessory protein needed during the final step in the assembly of 30S ribosomal subunit, possibly for assembly of the head region. Essential for efficient processing of 16S rRNA. May be needed both before and after RbfA during the maturation of 16S rRNA. It has affinity for free ribosomal 30S subunits but not for 70S ribosomes. This is Ribosome maturation factor RimM from Thiobacillus denitrificans (strain ATCC 25259 / T1).